The following is a 163-amino-acid chain: Nucleotide-binding protein BC_1159 (163 aa).

This sequence belongs to the YajQ family.

In terms of biological role, nucleotide-binding protein. The protein is Nucleotide-binding protein BC_1159 of Bacillus cereus (strain ATCC 14579 / DSM 31 / CCUG 7414 / JCM 2152 / NBRC 15305 / NCIMB 9373 / NCTC 2599 / NRRL B-3711).